Here is a 394-residue protein sequence, read N- to C-terminus: Elongation factor Tu (394 aa).

The tr-type G domain occupies 10–204; that stretch reads KPHINIGTIG…AVDDNIPTPE (195 aa). Positions 19 to 26 are G1; it reads GHVDHGKT. 19–26 contacts GTP; the sequence is GHVDHGKT. Threonine 26 serves as a coordination point for Mg(2+). The tract at residues 60-64 is G2; the sequence is GITIN. Residues 81 to 84 are G3; the sequence is DCPG. Residues 81–85 and 136–139 contribute to the GTP site; these read DCPGH and NKID. The segment at 136–139 is G4; it reads NKID. The segment at 174–176 is G5; sequence SAL.

The protein belongs to the TRAFAC class translation factor GTPase superfamily. Classic translation factor GTPase family. EF-Tu/EF-1A subfamily. As to quaternary structure, monomer.

The protein localises to the cytoplasm. The enzyme catalyses GTP + H2O = GDP + phosphate + H(+). In terms of biological role, GTP hydrolase that promotes the GTP-dependent binding of aminoacyl-tRNA to the A-site of ribosomes during protein biosynthesis. This is Elongation factor Tu from Chlamydia felis (strain Fe/C-56) (Chlamydophila felis).